The chain runs to 200 residues: Holliday junction branch migration complex subunit RuvA (200 aa).

Residues M1–I63 are domain I. The domain II stretch occupies residues N64–L142. The tract at residues N143–H149 is flexible linker. Residues A150–A200 form a domain III region.

The protein belongs to the RuvA family. As to quaternary structure, homotetramer. Forms an RuvA(8)-RuvB(12)-Holliday junction (HJ) complex. HJ DNA is sandwiched between 2 RuvA tetramers; dsDNA enters through RuvA and exits via RuvB. An RuvB hexamer assembles on each DNA strand where it exits the tetramer. Each RuvB hexamer is contacted by two RuvA subunits (via domain III) on 2 adjacent RuvB subunits; this complex drives branch migration. In the full resolvosome a probable DNA-RuvA(4)-RuvB(12)-RuvC(2) complex forms which resolves the HJ.

It localises to the cytoplasm. Functionally, the RuvA-RuvB-RuvC complex processes Holliday junction (HJ) DNA during genetic recombination and DNA repair, while the RuvA-RuvB complex plays an important role in the rescue of blocked DNA replication forks via replication fork reversal (RFR). RuvA specifically binds to HJ cruciform DNA, conferring on it an open structure. The RuvB hexamer acts as an ATP-dependent pump, pulling dsDNA into and through the RuvAB complex. HJ branch migration allows RuvC to scan DNA until it finds its consensus sequence, where it cleaves and resolves the cruciform DNA. This Staphylococcus saprophyticus subsp. saprophyticus (strain ATCC 15305 / DSM 20229 / NCIMB 8711 / NCTC 7292 / S-41) protein is Holliday junction branch migration complex subunit RuvA.